Here is a 714-residue protein sequence, read N- to C-terminus: Polyribonucleotide nucleotidyltransferase (714 aa).

Mg(2+)-binding residues include Asp489 and Asp495. Residues 556 to 615 (PKIDTIKIDVDKIKVVIGKGGETIDKIIAETGVKIDIDEEGNVSIYSSDQDAINRAKEII) enclose the KH domain. Positions 625 to 693 (GEVYHAKVVR…DKGRIDASMK (69 aa)) constitute an S1 motif domain. Residues 691–714 (SMKALVPRPPKPEKSEAKKEGKHD) form a disordered region. Positions 700-714 (PKPEKSEAKKEGKHD) are enriched in basic and acidic residues.

Belongs to the polyribonucleotide nucleotidyltransferase family. Mg(2+) is required as a cofactor.

The protein localises to the cytoplasm. The enzyme catalyses RNA(n+1) + phosphate = RNA(n) + a ribonucleoside 5'-diphosphate. Involved in mRNA degradation. Catalyzes the phosphorolysis of single-stranded polyribonucleotides processively in the 3'- to 5'-direction. In Streptococcus equi subsp. equi (strain 4047), this protein is Polyribonucleotide nucleotidyltransferase.